The sequence spans 240 residues: UDP-2,3-diacylglucosamine hydrolase (240 aa).

Residues Asp-8, His-10, Asp-41, Asn-79, and His-114 each coordinate Mn(2+). 79–80 (NR) is a substrate binding site. Asp-122, Ser-160, Asn-164, Lys-167, and His-195 together coordinate substrate. Positions 195 and 197 each coordinate Mn(2+).

The protein belongs to the LpxH family. The cofactor is Mn(2+).

Its subcellular location is the cell inner membrane. The catalysed reaction is UDP-2-N,3-O-bis[(3R)-3-hydroxytetradecanoyl]-alpha-D-glucosamine + H2O = 2-N,3-O-bis[(3R)-3-hydroxytetradecanoyl]-alpha-D-glucosaminyl 1-phosphate + UMP + 2 H(+). Its pathway is glycolipid biosynthesis; lipid IV(A) biosynthesis; lipid IV(A) from (3R)-3-hydroxytetradecanoyl-[acyl-carrier-protein] and UDP-N-acetyl-alpha-D-glucosamine: step 4/6. Its function is as follows. Hydrolyzes the pyrophosphate bond of UDP-2,3-diacylglucosamine to yield 2,3-diacylglucosamine 1-phosphate (lipid X) and UMP by catalyzing the attack of water at the alpha-P atom. Involved in the biosynthesis of lipid A, a phosphorylated glycolipid that anchors the lipopolysaccharide to the outer membrane of the cell. In Escherichia coli O157:H7, this protein is UDP-2,3-diacylglucosamine hydrolase.